The primary structure comprises 334 residues: Holliday junction branch migration complex subunit RuvB (334 aa).

Positions 1–182 are large ATPase domain (RuvB-L); the sequence is MNERMVDQSM…FGVHLRLEYY (182 aa). Residues Leu-21, Arg-22, Gly-63, Lys-66, Thr-67, Thr-68, 129-131, Arg-172, Tyr-182, and Arg-219 contribute to the ATP site; that span reads EDF. A Mg(2+)-binding site is contributed by Thr-67. Residues 183-253 form a small ATPAse domain (RuvB-S) region; it reads NESDLKEIII…TTKHALGLLQ (71 aa). The tract at residues 256–334 is head domain (RuvB-H); sequence QHGLDYIDHK…HFAKSNEERE (79 aa). DNA contacts are provided by Arg-292, Arg-311, and Arg-316.

The protein belongs to the RuvB family. In terms of assembly, homohexamer. Forms an RuvA(8)-RuvB(12)-Holliday junction (HJ) complex. HJ DNA is sandwiched between 2 RuvA tetramers; dsDNA enters through RuvA and exits via RuvB. An RuvB hexamer assembles on each DNA strand where it exits the tetramer. Each RuvB hexamer is contacted by two RuvA subunits (via domain III) on 2 adjacent RuvB subunits; this complex drives branch migration. In the full resolvosome a probable DNA-RuvA(4)-RuvB(12)-RuvC(2) complex forms which resolves the HJ.

Its subcellular location is the cytoplasm. It carries out the reaction ATP + H2O = ADP + phosphate + H(+). The RuvA-RuvB-RuvC complex processes Holliday junction (HJ) DNA during genetic recombination and DNA repair, while the RuvA-RuvB complex plays an important role in the rescue of blocked DNA replication forks via replication fork reversal (RFR). RuvA specifically binds to HJ cruciform DNA, conferring on it an open structure. The RuvB hexamer acts as an ATP-dependent pump, pulling dsDNA into and through the RuvAB complex. RuvB forms 2 homohexamers on either side of HJ DNA bound by 1 or 2 RuvA tetramers; 4 subunits per hexamer contact DNA at a time. Coordinated motions by a converter formed by DNA-disengaged RuvB subunits stimulates ATP hydrolysis and nucleotide exchange. Immobilization of the converter enables RuvB to convert the ATP-contained energy into a lever motion, pulling 2 nucleotides of DNA out of the RuvA tetramer per ATP hydrolyzed, thus driving DNA branch migration. The RuvB motors rotate together with the DNA substrate, which together with the progressing nucleotide cycle form the mechanistic basis for DNA recombination by continuous HJ branch migration. Branch migration allows RuvC to scan DNA until it finds its consensus sequence, where it cleaves and resolves cruciform DNA. This Staphylococcus aureus (strain MRSA252) protein is Holliday junction branch migration complex subunit RuvB.